A 185-amino-acid polypeptide reads, in one-letter code: V-type ATP synthase subunit E (185 aa).

This sequence belongs to the V-ATPase E subunit family.

In terms of biological role, produces ATP from ADP in the presence of a proton gradient across the membrane. This chain is V-type ATP synthase subunit E, found in Deinococcus radiodurans (strain ATCC 13939 / DSM 20539 / JCM 16871 / CCUG 27074 / LMG 4051 / NBRC 15346 / NCIMB 9279 / VKM B-1422 / R1).